Consider the following 958-residue polypeptide: MASIAVTTTTTTTTAEFVTSPRTSIVPEQPNTLHDVIAQAVDSYPLHELGFITSSAHDSSIQTKTFSAFNQYVRNLARAMLEWGKPTGSVVVVYLTEHEDNMTAVWACLLAGFVPCLQPALSAQQAHKEGHVAHIKNLFGSATWLTSELGAEQINSISGLEVHLLSELKSSAEKFTVAADWVAYEAKPDDEAILFLTSGSTGFSKAVVHTHRTILAACRAKGQSYGLTSESQVLNWVGFDHVAGSLEMHITPLLYGASQLHVHASAILADPLRLLRLIDEKSIELAFAPNFLLSKLTRDLEKRTDLFGSFDLSSIKRINSGGEAVVSKTAQAFAATMKQLSKNPSAVSFVISAGFGMTETCAGCIYDPVDVLKNKPAHEFLDLGRPINGCEMRIVDPEDGATLRPDGESGELQVRGPMVFVRYYNNAEATSSSFVEGGWYRTGDVGIIENGVMRLSGRIKDTVIVHGVSYGIPELETYLQTVEGVTHSFLAAAPYRAPGQETEGFIIFYSPTFDLNGADASTKLFATHRALRDICVKMITLPPQFVVPIPVNQMEKTTLGKLSRARLISLFKQGQLAQHIARSEELLSEARGATFVAPSTETEKALAKIYAGIFNLAESEMSASDNFFELGGTSIDVIRLKREGEAHFGLPEIPTIQILKHPVVSSLANYVNALLSKDSQTEEYDPIVPLQLTGNKTPIFFVHPGVGEVLIFVNLAKYFQNERPFYALRARGFEPGHPFFTSMDEMVSCYAAAVKRTQATGPYAIAGYSYGGVVAFEVAKRLEAMGDEVKFTGLINIPPHIADRMHEIDWTGGMLNLSYFLGLVSKHDANDLAPALRPMTRNEQLEVVWKLSPPERLVELQLTPGKLDHWVDIAGSLIECGKDYNPSGSVSAVDVFYAIPLRGSKADWLNNQLKPWSGFSRGDASYTDVPGQHYTLMDFDHVPQFQKIFRGRLEARGL.

Residues 60–465 form an adenylation (A) domain region; that stretch reads SIQTKTFSAF…SGRIKDTVIV (406 aa). Positions 597–675 constitute a Carrier domain; the sequence is APSTETEKAL…SLANYVNALL (79 aa). Residues 602–672 form a thiolation and peptide carrier (T) domain region; that stretch reads TEKALAKIYA…VVSSLANYVN (71 aa). At Ser634 the chain carries O-(pantetheine 4'-phosphoryl)serine. The segment at 698–946 is thioesterase (TE) domain; sequence PIFFVHPGVG…MDFDHVPQFQ (249 aa).

Belongs to the ATP-dependent AMP-binding enzyme family.

The protein operates within secondary metabolite biosynthesis. In terms of biological role, an L-tyrosine:2-oxoglutarate aminotransferase and atromentin synthetase greA catalyze consecutive steps to turn over L-tyrosine into atromentin, which represents the generic precursor molecule for the entire terphenylquinone and pulvinic acid family of pigments, which are widely distributed secondary metabolites in homobasidiomycetes. The first step catalyzed by the aminotransferase converts L-tyrosine in to 4-hydroxyphenylpyruvate (4-HPP). Adenylation of two 4-HPP monomers by the greA adenylation (A) domain, covalent tethering of the monomers as a thioester and oxoester onto the greA thiolation (T) and thioesterase (TE) domains, respectively, and symmetric C-C-bond formation between two monomers catalyzed by the greA TE domain leads to atromentin. The sequence is that of Atromentin synthetase greA (greA) from Suillus grevillei (Larch bolete).